The sequence spans 260 residues: ATP synthase subunit a (260 aa).

A run of 6 helical transmembrane segments spans residues 37–57, 95–115, 125–145, 154–174, 191–211, and 233–253; these read FTNA…FMTL, FFPF…IGMF, IVVT…TGFV, VFVP…IEII, MLAG…FMTM, and EFLV…MYLH.

It belongs to the ATPase A chain family. As to quaternary structure, F-type ATPases have 2 components, CF(1) - the catalytic core - and CF(0) - the membrane proton channel. CF(1) has five subunits: alpha(3), beta(3), gamma(1), delta(1), epsilon(1). CF(0) has three main subunits: a(1), b(2) and c(9-12). The alpha and beta chains form an alternating ring which encloses part of the gamma chain. CF(1) is attached to CF(0) by a central stalk formed by the gamma and epsilon chains, while a peripheral stalk is formed by the delta and b chains.

The protein resides in the cell inner membrane. In terms of biological role, key component of the proton channel; it plays a direct role in the translocation of protons across the membrane. The chain is ATP synthase subunit a from Parvibaculum lavamentivorans (strain DS-1 / DSM 13023 / NCIMB 13966).